Here is a 527-residue protein sequence, read N- to C-terminus: Eukaryotic translation initiation factor 4B1 (527 aa).

Disordered stretches follow at residues 1–370 and 453–527; these read MAKP…REVV and FGQR…RQGW. 2 stretches are compositionally biased toward low complexity: residues 35–45 and 74–85; these read AAAGGAASFPS and GAAGAPRRVAPA. 2 stretches are compositionally biased toward basic and acidic residues: residues 102–155 and 181–194; these read PRER…DNWG and RSDD…DKKP. The Nuclear localization signal signature appears at 196-203; it reads PSRYPSLG. Positions 203–232 are enriched in gly residues; that stretch reads GTGGGFRESSGGGFRESSGGGFRESSGGGF. The segment covering 293–317 has biased composition (basic and acidic residues); that stretch reads KPREEVLAEKGLDWRKMEGEIEKKT. Positions 319 to 336 are enriched in low complexity; sequence RPTSSHSSRPNSAHSSRP. Composition is skewed to basic and acidic residues over residues 472–485 and 496–510; these read EEPH…DRPR and PVEE…RERG. Low complexity predominate over residues 518 to 527; the sequence is SDRSSTRQGW.

The protein belongs to the eIF-4 subunit B family. In terms of assembly, homodimer. Nonspherical monomer. mRNA-discriminating component of initiation complexes. Phosphorylated.

The protein resides in the nucleus. Promotes the eIF4F and eIF4A RNA-dependent ATP-hydrolysis activity with different efficiency depending on mRNAs, thus providing mRNA discrimination during initiation of translation. This chain is Eukaryotic translation initiation factor 4B1, found in Triticum aestivum (Wheat).